We begin with the raw amino-acid sequence, 538 residues long: Cytochrome P450 monooxygenase okaG (538 aa).

The helical transmembrane segment at Leu3 to Phe23 threads the bilayer. Position 484 (Cys484) interacts with heme.

This sequence belongs to the cytochrome P450 family. Heme serves as cofactor.

The protein localises to the membrane. It catalyses the reaction 12-deshydroxyl okaramine E + 2 reduced [NADPH--hemoprotein reductase] + 2 O2 = 3-desmethyl okaramine B + 2 oxidized [NADPH--hemoprotein reductase] + 2 H2O + 2 H(+). The protein operates within alkaloid biosynthesis. In terms of biological role, nonribosomal peptide synthetase; part of the gene cluster that mediates the biosynthesis of okaramine B, a prenylated indole alkaloid that possesses an unusual octacyclic ring system, including a four-membered azetidine ring and an eight-membered azocine ring, and that exhibits insecticidal activity against silkworm larvae. Within the pathway, okaG acts as a 2,3-diol synthase that installs 2,3-diol on the okaramine scaffold to convert 12-deshydroxyl okaramine E into 3-desmethyl okaramine B. OkaG is also able to produce use okaramine E and produce okaramine D with the help of the methyltransferase okaF. The biosynthesis begins with the NRPS okaA that condenses two tryptophan molecules into cyclo(L-Trp-L-Trp). Prenylation by the prenyltransferase okaC then leads to the formation of cyclo(N8-(alpha,alpha-dimethylallyl)-L-Trp-6a-(alpha,alpha-dime-thylallyl)-L-Trp). This is followed by indole 2,3-epoxidation by the FAD-dependent monooxygenase okaB to facilitate the formation of the hexahydropyrrolo[2,3-b]indole (HPI) moiety of okaramine C. The cytochrome P450 monooxygenase okaD then likely catalyzes formation of the eight-membered ring of okaramine A. The dioxygenase okaE further forms the unusual 2-dimethyl-3-methyl-azetidine ring to yield 12-deshydroxyl okaramine E, as well as the hydroxylation of 12-deshydroxyl okaramine E to produce okaramine E. The cytochrome P450 monoxygenase okaG converts 12-deshydroxyl okaramine E into 3-desmethyl okaramine B which is further methylated by the methyltransferase okaF into okaramine B. In a shunt pathway, okaG and okaF together are also able to convert okaramine E into okaramine D. Okaramine H is produced by nonenzymatic conversion from okaramine A. This Penicillium ochrochloron protein is Cytochrome P450 monooxygenase okaG.